Here is a 421-residue protein sequence, read N- to C-terminus: UDP-N-acetylglucosamine 1-carboxyvinyltransferase (421 aa).

Residue 22-23 (KN) participates in phosphoenolpyruvate binding. UDP-N-acetyl-alpha-D-glucosamine is bound at residue arginine 93. Catalysis depends on cysteine 117, which acts as the Proton donor. Cysteine 117 carries the post-translational modification 2-(S-cysteinyl)pyruvic acid O-phosphothioketal. Residues 122–126 (RPVDL), aspartate 308, and leucine 330 each bind UDP-N-acetyl-alpha-D-glucosamine.

It belongs to the EPSP synthase family. MurA subfamily.

It is found in the cytoplasm. The catalysed reaction is phosphoenolpyruvate + UDP-N-acetyl-alpha-D-glucosamine = UDP-N-acetyl-3-O-(1-carboxyvinyl)-alpha-D-glucosamine + phosphate. The protein operates within cell wall biogenesis; peptidoglycan biosynthesis. Cell wall formation. Adds enolpyruvyl to UDP-N-acetylglucosamine. The protein is UDP-N-acetylglucosamine 1-carboxyvinyltransferase of Helicobacter hepaticus (strain ATCC 51449 / 3B1).